Reading from the N-terminus, the 226-residue chain is Thiopurine S-methyltransferase (226 aa).

4 residues coordinate S-adenosyl-L-methionine: tryptophan 16, methionine 51, glutamate 72, and arginine 131.

Belongs to the class I-like SAM-binding methyltransferase superfamily. TPMT family.

Its subcellular location is the cytoplasm. The catalysed reaction is S-adenosyl-L-methionine + a thiopurine = S-adenosyl-L-homocysteine + a thiopurine S-methylether.. This is Thiopurine S-methyltransferase from Francisella tularensis subsp. tularensis (strain SCHU S4 / Schu 4).